Consider the following 443-residue polypeptide: Chorionicgonadotropic hormone-like protein (443 aa).

The span at 263-286 (RCAGRPCPRRHRRPCNASKSHRPM) shows a compositional bias: basic residues. The segment at 263 to 292 (RCAGRPCPRRHRRPCNASKSHRPMRMQQRD) is disordered.

To mammalian CGHB.

The protein resides in the secreted. It localises to the cell wall. Its function is as follows. Cell wall protein that resembles the beta subunit of human chorionic gonadotropin. Stimulates growth and change in morphology. The protein is Chorionicgonadotropic hormone-like protein (xcg) of Stenotrophomonas maltophilia (Pseudomonas maltophilia).